Here is a 229-residue protein sequence, read N- to C-terminus: Putative N-acetylmannosamine-6-phosphate 2-epimerase (229 aa).

The protein belongs to the NanE family.

The enzyme catalyses an N-acyl-D-glucosamine 6-phosphate = an N-acyl-D-mannosamine 6-phosphate. It participates in amino-sugar metabolism; N-acetylneuraminate degradation; D-fructose 6-phosphate from N-acetylneuraminate: step 3/5. In terms of biological role, converts N-acetylmannosamine-6-phosphate (ManNAc-6-P) to N-acetylglucosamine-6-phosphate (GlcNAc-6-P). This is Putative N-acetylmannosamine-6-phosphate 2-epimerase from Salmonella arizonae (strain ATCC BAA-731 / CDC346-86 / RSK2980).